The chain runs to 214 residues: Cytochrome b (214 aa).

A run of 4 helical transmembrane segments spans residues 31 to 51 (FGSMLMTCLALQTITGFFLAI), 75 to 96 (WIMQNLHAIGASMFFVCIYIHI), 111 to 131 (WLSGVILLTALMATAFFGYVL), and 176 to 196 (FFALHFVLPFIIISMSSIHII). Residues His81 and His95 each contribute to the heme b site. Heme b-binding residues include His180 and His194. An a ubiquinone-binding site is contributed by His199.

This sequence belongs to the cytochrome b family. The cytochrome bc1 complex contains 3 respiratory subunits (MT-CYB, CYC1 and UQCRFS1), 2 core proteins (UQCRC1 and UQCRC2) and probably 6 low-molecular weight proteins. It depends on heme b as a cofactor.

The protein resides in the mitochondrion inner membrane. Its function is as follows. Component of the ubiquinol-cytochrome c reductase complex (complex III or cytochrome b-c1 complex) that is part of the mitochondrial respiratory chain. The b-c1 complex mediates electron transfer from ubiquinol to cytochrome c. Contributes to the generation of a proton gradient across the mitochondrial membrane that is then used for ATP synthesis. The protein is Cytochrome b (MT-CYB) of Atractaspis micropholis (Mole viper).